Here is a 390-residue protein sequence, read N- to C-terminus: tRNA-specific 2-thiouridylase MnmA (390 aa).

Residues 33 to 40 (AMSGGVDS) and Met-59 each bind ATP. Cys-131 (nucleophile) is an active-site residue. A disulfide bridge links Cys-131 with Cys-230. Gly-155 contributes to the ATP binding site. Positions 180 to 182 (KDQ) are interaction with tRNA. Cys-230 serves as the catalytic Cysteine persulfide intermediate.

It belongs to the MnmA/TRMU family.

The protein localises to the cytoplasm. The enzyme catalyses S-sulfanyl-L-cysteinyl-[protein] + uridine(34) in tRNA + AH2 + ATP = 2-thiouridine(34) in tRNA + L-cysteinyl-[protein] + A + AMP + diphosphate + H(+). In terms of biological role, catalyzes the 2-thiolation of uridine at the wobble position (U34) of tRNA, leading to the formation of s(2)U34. The chain is tRNA-specific 2-thiouridylase MnmA from Symbiobacterium thermophilum (strain DSM 24528 / JCM 14929 / IAM 14863 / T).